The chain runs to 37 residues: Potassium channel toxin alpha-KTx 11.1 (37 aa).

Disulfide bonds link Cys8/Cys27, Cys13/Cys33, and Cys17/Cys35.

Belongs to the short scorpion toxin superfamily. Potassium channel inhibitor family. Alpha-KTx 11 subfamily. In terms of tissue distribution, expressed by the venom gland.

It localises to the secreted. Its function is as follows. Binds and inhibits voltage-sensitive potassium channels. Inhibits the vertebrate potassium channels Kv1.1/KCNA1, Kv1.2/KCNA2 and Kv1.3/KCNA3 with low affinity. Also weakly inhibits Kv7.1/KCNQ1 (10 uM of the toxin inhibits currents by 21.43%). This is Potassium channel toxin alpha-KTx 11.1 from Parabuthus villosus (Black hairy thick-tailed scorpion).